The primary structure comprises 1607 residues: Dicer-like protein 1 (1607 aa).

Residues 1–74 (MNAEMREGSS…PDTKKWIVND (74 aa)) form a disordered region. Residues 142-324 (LFERAKTQNT…IARSPELEGL (183 aa)) enclose the Helicase ATP-binding domain. Residue 155–162 (LDTGSGKT) participates in ATP binding. Residues 267–270 (DEAH) carry the DEAH box motif. The 172-residue stretch at 461–632 (KVVILLRILR…EALPADRKLT (172 aa)) folds into the Helicase C-terminal domain. Residues 665 to 755 (SLICLAAFVA…RPTFTKQLPA (91 aa)) enclose the Dicer dsRNA-binding fold domain. In terms of domain architecture, PAZ spans 905–1040 (GAVTFVRDNE…IVLEPLRISP (136 aa)). 2 RNase III domains span residues 1063-1219 (LVAL…LTAQ) and 1272-1447 (AARF…VDSR). Mg(2+)-binding residues include Glu1312, Asp1433, and Glu1436. The DRBM domain occupies 1478-1556 (HPVTFLAGIM…AKKAIQVLEG (79 aa)). The Zn(2+) site is built by Cys1493, His1527, Cys1568, and Cys1570.

It belongs to the helicase family. Dicer subfamily. Mg(2+) is required as a cofactor. The cofactor is Mn(2+).

Its function is as follows. Dicer-like endonuclease involved in cleaving double-stranded RNA in the RNA interference (RNAi) pathway. Produces 21 to 25 bp dsRNAs (siRNAs) which target the selective destruction of homologous RNAs leading to sequence-specific suppression of gene expression, called post-transcriptional gene silencing (PTGS). Part of a broad host defense response against viral infection and transposons. In Chaetomium globosum (strain ATCC 6205 / CBS 148.51 / DSM 1962 / NBRC 6347 / NRRL 1970) (Soil fungus), this protein is Dicer-like protein 1 (DCL1).